Consider the following 497-residue polypeptide: Glutamyl-tRNA reductase (497 aa).

Residues 58–61 (TCNR), Ser118, 123–125 (EQQ), and Gln129 contribute to the substrate site. The Nucleophile role is filled by Cys59. 214-219 (GAGAMA) lines the NADP(+) pocket. Over residues 461–477 (VTQPGQADSSAAQTAGT) the composition is skewed to polar residues. The segment at 461-486 (VTQPGQADSSAAQTAGTSARADQIPS) is disordered.

It belongs to the glutamyl-tRNA reductase family. As to quaternary structure, homodimer.

It carries out the reaction (S)-4-amino-5-oxopentanoate + tRNA(Glu) + NADP(+) = L-glutamyl-tRNA(Glu) + NADPH + H(+). Its pathway is porphyrin-containing compound metabolism; protoporphyrin-IX biosynthesis; 5-aminolevulinate from L-glutamyl-tRNA(Glu): step 1/2. In terms of biological role, catalyzes the NADPH-dependent reduction of glutamyl-tRNA(Glu) to glutamate 1-semialdehyde (GSA). The chain is Glutamyl-tRNA reductase from Corynebacterium jeikeium (strain K411).